A 752-amino-acid polypeptide reads, in one-letter code: MLPGWHSIASLVKRIDIPIVASTTPAEIAEMQQDAWPEAGKYGLGWVYFSVILLAISTIIRFYHLWGDQIRIALHKEDMAGTSPYVTSPQEEYELPSAATDSSTTHFFPARGPLPSTNTTKQQSSISTIAPLNNTIAFVRWIFYRPIPVLRIGKLRIGFPSLGASSIILAALIFVTLYSFVPQPLYYSSISIGSPPLAIRAGMIAVAMIPWIIALSTRANFVSILTGISHERLNVLHRWAGYLCLFLSLIHMVPFYVTPIWESTNFMYYQQYFPRNIYIYGTGWAALVPLIVLCLHSLPILRAWMYELFKLVHLPLSIIFLAMIFWHSKNFLASWDYLWATVAIWMLSYAVRLFYVNWSNPLRLSFLIGEECAVTILPQNAIKVTVATQMKWKPGQFVYLRMPGISLFERHPFTISSLCSGDFPSEYGENYRDLALVFRPFGGFTRNVFLKTFEYGPYKTWTAFLEGPYGGMKRDMAAFDDVVFFAGGSGITATASHLLNLIKKMRDRKAVTRSVRVVWAFRSPETIDWFREELRICRDFAPPNTVHCHFFLTGLEPHGQDQLAQNQFYQEMLRDKMYNTLEGMDKRNSAYIREEAAGDPEIEKELRRENEDAITALPLAHTLPHINTSRHYTSPMDNNYQHAPYPAPHVSPADTPFNFGFPPSSTVFPKLTTRVGTVPLQRNGWRIDYARPNIPQVLKDYSRTFGRRTCVFVCGPPSMRVEVSKAVAQLQQVVMTDSSKDEIFLHAENYNV.

The chain crosses the membrane as a helical span at residues 40–60 (GKYGLGWVYFSVILLAISTII). 2 N-linked (GlcNAc...) asparagine glycosylation sites follow: asparagine 118 and asparagine 133. 2 helical membrane passes run 157–177 (IGFP…FVTL) and 195–215 (PPLA…IIAL). Positions 201-348 (AGMIAVAMIP…WATVAIWMLS (148 aa)) constitute a Ferric oxidoreductase domain. Heme-binding residues include histidine 237 and histidine 251. The next 3 helical transmembrane spans lie at 241–261 (GYLC…TPIW), 281–301 (GTGW…LPIL), and 306–326 (YELF…MIFW). Positions 313 and 327 each coordinate heme. The chain crosses the membrane as a helical span at residues 331 to 351 (FLASWDYLWATVAIWMLSYAV). The FAD-binding FR-type domain maps to 349–475 (YAVRLFYVNW…EGPYGGMKRD (127 aa)). Asparagine 357 carries an N-linked (GlcNAc...) asparagine glycan. Residue 467–470 (GPYG) coordinates NADP(+). Residues 482-502 (VVFFAGGSGITATASHLLNLI) form a helical membrane-spanning segment. Asparagine 627 is a glycosylation site (N-linked (GlcNAc...) asparagine). Position 714 to 715 (714 to 715 (CG)) interacts with NADP(+).

This sequence belongs to the ferric reductase (FRE) family. FAD serves as cofactor. It depends on heme as a cofactor.

It is found in the cell membrane. It carries out the reaction 2 a Fe(II)-siderophore + NADP(+) + H(+) = 2 a Fe(III)-siderophore + NADPH. Its function is as follows. Probable cell surface ferric reductase that acts as a negative regulatory factor of growth and development. Involved in kojic acid production through the regulation of kojA expression. The chain is Probable cell surface ferric reductase kap2 from Aspergillus oryzae (strain ATCC 42149 / RIB 40) (Yellow koji mold).